Here is an 84-residue protein sequence, read N- to C-terminus: Small ribosomal subunit protein uS17 (84 aa).

Belongs to the universal ribosomal protein uS17 family. As to quaternary structure, part of the 30S ribosomal subunit.

Functionally, one of the primary rRNA binding proteins, it binds specifically to the 5'-end of 16S ribosomal RNA. The protein is Small ribosomal subunit protein uS17 of Clostridium botulinum (strain ATCC 19397 / Type A).